The following is a 247-amino-acid chain: 6-phosphogluconolactonase (247 aa).

The protein belongs to the glucosamine/galactosamine-6-phosphate isomerase family. 6-phosphogluconolactonase subfamily.

It catalyses the reaction 6-phospho-D-glucono-1,5-lactone + H2O = 6-phospho-D-gluconate + H(+). It functions in the pathway carbohydrate degradation; pentose phosphate pathway; D-ribulose 5-phosphate from D-glucose 6-phosphate (oxidative stage): step 2/3. Its function is as follows. Hydrolysis of 6-phosphogluconolactone to 6-phosphogluconate. The chain is 6-phosphogluconolactonase (pgl) from Mycobacterium bovis (strain ATCC BAA-935 / AF2122/97).